Reading from the N-terminus, the 253-residue chain is Ferritin-2, chloroplastic (253 aa).

The transit peptide at 1 to 45 directs the protein to the chloroplast; sequence MLHKASPALSLLSSGYTGGGNLFPPSRNSSNLLFSPSGSRFSVQA. An extension peptide (EP) region spans residues 46–82; it reads AKGTNTKSLTGVVFEPFEEVKKEMELVPTTPFVSLAR. The region spanning 83 to 236 is the Ferritin-like diiron domain; sequence HKFSDDSESA…EYVAQLRRIG (154 aa). Positions 100, 135, 138, 184, and 218 each coordinate Fe cation.

It belongs to the ferritin family. In terms of assembly, oligomer of 24 subunits. There are two types of subunits: L (light) chain and H (heavy) chain. The major chain can be light or heavy, depending on the species and tissue type. The functional molecule forms a roughly spherical shell with a diameter of 12 nm and contains a central cavity into which the insoluble mineral iron core is deposited.

It localises to the plastid. The protein localises to the chloroplast. It carries out the reaction 4 Fe(2+) + O2 + 4 H(+) = 4 Fe(3+) + 2 H2O. Stores iron in a soluble, non-toxic, readily available form. Important for iron homeostasis. Has ferroxidase activity. Iron is taken up in the ferrous form and deposited as ferric hydroxides after oxidation. The polypeptide is Ferritin-2, chloroplastic (FER2) (Arabidopsis thaliana (Mouse-ear cress)).